We begin with the raw amino-acid sequence, 568 residues long: Dihydroxy-acid dehydratase 1 (568 aa).

A disordered region spans residues 1-22 (MAEQTNTPDLKPRSRDVTDGLE). Positions 10 to 22 (LKPRSRDVTDGLE) are enriched in basic and acidic residues. Cysteine 57 lines the [2Fe-2S] cluster pocket. Residue aspartate 89 coordinates Mg(2+). A [2Fe-2S] cluster-binding site is contributed by cysteine 130. Residues aspartate 131 and lysine 132 each coordinate Mg(2+). N6-carboxylysine is present on lysine 132. Cysteine 207 serves as a coordination point for [2Fe-2S] cluster. Glutamate 458 contacts Mg(2+). Catalysis depends on serine 484, which acts as the Proton acceptor.

The protein belongs to the IlvD/Edd family. In terms of assembly, homodimer. [2Fe-2S] cluster serves as cofactor. Requires Mg(2+) as cofactor.

It carries out the reaction (2R)-2,3-dihydroxy-3-methylbutanoate = 3-methyl-2-oxobutanoate + H2O. The enzyme catalyses (2R,3R)-2,3-dihydroxy-3-methylpentanoate = (S)-3-methyl-2-oxopentanoate + H2O. Its pathway is amino-acid biosynthesis; L-isoleucine biosynthesis; L-isoleucine from 2-oxobutanoate: step 3/4. The protein operates within amino-acid biosynthesis; L-valine biosynthesis; L-valine from pyruvate: step 3/4. Functionally, functions in the biosynthesis of branched-chain amino acids. Catalyzes the dehydration of (2R,3R)-2,3-dihydroxy-3-methylpentanoate (2,3-dihydroxy-3-methylvalerate) into 2-oxo-3-methylpentanoate (2-oxo-3-methylvalerate) and of (2R)-2,3-dihydroxy-3-methylbutanoate (2,3-dihydroxyisovalerate) into 2-oxo-3-methylbutanoate (2-oxoisovalerate), the penultimate precursor to L-isoleucine and L-valine, respectively. In Nocardia farcinica (strain IFM 10152), this protein is Dihydroxy-acid dehydratase 1.